Reading from the N-terminus, the 434-residue chain is Adenylosuccinate synthetase (434 aa).

Residues Gly-22–Lys-28 and Gly-50–Thr-52 each bind GTP. Asp-23 serves as the catalytic Proton acceptor. Mg(2+)-binding residues include Asp-23 and Gly-50. Residues Asp-23 to Lys-26, Asn-48 to His-51, Thr-139, Arg-153, Gln-234, Thr-249, and Arg-313 contribute to the IMP site. His-51 (proton donor) is an active-site residue. Position 309-315 (Ala-309–Arg-315) interacts with substrate. Residues Arg-315, Lys-341 to Asp-343, and Ser-423 to Gly-425 contribute to the GTP site.

Belongs to the adenylosuccinate synthetase family. In terms of assembly, homodimer. Mg(2+) is required as a cofactor.

The protein resides in the cytoplasm. The enzyme catalyses IMP + L-aspartate + GTP = N(6)-(1,2-dicarboxyethyl)-AMP + GDP + phosphate + 2 H(+). Its pathway is purine metabolism; AMP biosynthesis via de novo pathway; AMP from IMP: step 1/2. Functionally, plays an important role in the de novo pathway of purine nucleotide biosynthesis. Catalyzes the first committed step in the biosynthesis of AMP from IMP. In Chlorobium luteolum (strain DSM 273 / BCRC 81028 / 2530) (Pelodictyon luteolum), this protein is Adenylosuccinate synthetase.